The sequence spans 1765 residues: RANBP2-like and GRIP domain-containing protein 8 (1765 aa).

Thr19 bears the Phosphothreonine mark. The residue at position 21 (Ser21) is a Phosphoserine. TPR repeat units follow at residues 26 to 59 (SMKG…QERD), 60 to 93 (PKAH…NPTQ), and 648 to 681 (EDAH…VSYW). The interval 760-804 (GPLYKNGSLRNADSEIKHSTPSPTKYSLSPSKSYKYSPETPPRWT) is disordered. Low complexity predominate over residues 778-797 (STPSPTKYSLSPSKSYKYSP). One can recognise a RanBD1 1 domain in the interval 1036-1172 (HFEPVVQMPE…FEECQRLLLD (137 aa)). 2 disordered regions span residues 1216 to 1247 (TEEE…PTLE) and 1306 to 1330 (AKLN…EERD). Residues 1231–1244 (SDTTIKPNAENTGP) show a composition bias toward polar residues. Residues 1317–1329 (TDEESVVTQEEER) show a composition bias toward acidic residues. One can recognise a RanBD1 2 domain in the interval 1333-1469 (YFEPVVPLPD…FDEAKTAQEK (137 aa)). The span at 1580 to 1593 (NNSETSSVAQSGSE) shows a compositional bias: polar residues. 2 disordered regions span residues 1580 to 1621 (NNSE…KNLS) and 1746 to 1765 (KGKL…RSSG). Residues 1594 to 1617 (SKVEPKKCELSKNSDIEQSSDSKV) are compositionally biased toward basic and acidic residues. The GRIP domain occupies 1702-1752 (REKSAANLEYLKNVLLQFIFLKPGSERERLLPVINTMLQLSPEEKGKLAAV).

Interacts with GTP-bound ARL1.

In Homo sapiens (Human), this protein is RANBP2-like and GRIP domain-containing protein 8 (RGPD8).